A 258-amino-acid chain; its full sequence is MLILISPAKTLDYQSPLTTTRYTLPELLDNSQQLIHEARKLTPPQISTLMRISDKLAGINAARFHDWQRDFTPENARQAILAFKGDVYTGLQAETFSEDDFDFAQQHLRMLSGLYGVLRPLDLMQPYRLEMGIRLENARGKDLYQFWGDIITNKLNEALAAQGDNVVINLASDEYFKSVKPKKLNAEIIKPVFLDEKNGKFKIISFYAKKARGLMSRFIIENRLTKPEQLTGFNSEGYFFDEDSSSNGELVFKRYEQR.

The protein belongs to the UPF0246 family.

The chain is UPF0246 protein YaaA from Escherichia coli (strain SE11).